Reading from the N-terminus, the 204-residue chain is Synaptosomal-associated protein 25-A (204 aa).

The segment covering Met1–Leu11 has biased composition (basic and acidic residues). Residues Met1 to Ser25 form a disordered region. T-SNARE coiled-coil homology domains are found at residues Asp19 to Leu81 and Asp138 to Met200.

The protein belongs to the SNAP-25 family.

It is found in the synapse. The protein localises to the synaptosome. It localises to the cell membrane. In terms of biological role, may play an important role in the synaptic function of specific neuronal systems. Associates with proteins involved in vesicle docking and membrane fusion. This is Synaptosomal-associated protein 25-A (snap25a) from Carassius auratus (Goldfish).